We begin with the raw amino-acid sequence, 567 residues long: 2-isopropylmalate synthase (567 aa).

The 275-residue stretch at 28-302 (PQWCSVDLRD…NPELDFSDIN (275 aa)) folds into the Pyruvate carboxyltransferase domain. Residues Asp37, His241, His243, and Asn277 each coordinate Mg(2+). A regulatory domain region spans residues 435–567 (IRTPLQLNYH…DMDTQEEDIA (133 aa)).

Belongs to the alpha-IPM synthase/homocitrate synthase family. LeuA type 2 subfamily. As to quaternary structure, homodimer. Mg(2+) serves as cofactor.

It is found in the cytoplasm. It carries out the reaction 3-methyl-2-oxobutanoate + acetyl-CoA + H2O = (2S)-2-isopropylmalate + CoA + H(+). The protein operates within amino-acid biosynthesis; L-leucine biosynthesis; L-leucine from 3-methyl-2-oxobutanoate: step 1/4. Catalyzes the condensation of the acetyl group of acetyl-CoA with 3-methyl-2-oxobutanoate (2-ketoisovalerate) to form 3-carboxy-3-hydroxy-4-methylpentanoate (2-isopropylmalate). The chain is 2-isopropylmalate synthase from Acetoanaerobium sticklandii (strain ATCC 12662 / DSM 519 / JCM 1433 / CCUG 9281 / NCIMB 10654 / HF) (Clostridium sticklandii).